A 365-amino-acid chain; its full sequence is Deoxyribonuclease-2-alpha (365 aa).

Positions 1–19 are cleaved as a signal peptide; it reads MATLSSLLLTALLWVPVGT. A disulfide bridge links cysteine 22 with cysteine 162. Residues asparagine 215, asparagine 269, and asparagine 293 are each glycosylated (N-linked (GlcNAc...) asparagine). 2 disulfides stabilise this stretch: cysteine 270–cysteine 348 and cysteine 311–cysteine 330. The active site involves histidine 298.

This sequence belongs to the DNase II family.

The protein resides in the lysosome. It catalyses the reaction Endonucleolytic cleavage to nucleoside 3'-phosphates and 3'-phosphooligonucleotide end-products.. In terms of biological role, hydrolyzes DNA under acidic conditions with a preference for double-stranded DNA. Plays a major role in the clearance of nucleic acids generated through apoptosis, hence preventing autoinflammation. Necessary for proper fetal development and for definitive erythropoiesis in fetal liver and bone marrow, where it degrades nuclear DNA expelled from erythroid precursor cells. The polypeptide is Deoxyribonuclease-2-alpha (DNASE2) (Bos taurus (Bovine)).